We begin with the raw amino-acid sequence, 253 residues long: DNA repair protein RecO (253 aa).

It belongs to the RecO family.

Functionally, involved in DNA repair and RecF pathway recombination. The polypeptide is DNA repair protein RecO (Dehalococcoides mccartyi (strain ATCC BAA-2266 / KCTC 15142 / 195) (Dehalococcoides ethenogenes (strain 195))).